A 28-amino-acid chain; its full sequence is Small integral membrane protein 47 (28 aa).

The helical transmembrane segment at 7–24 threads the bilayer; sequence VTLAMALFTILTSIYFFN.

The protein localises to the membrane. This is Small integral membrane protein 47 from Homo sapiens (Human).